The chain runs to 260 residues: Thaumatin-like protein 1 (260 aa).

A signal peptide spans 1-32 (MIITVLHSHVSFYFIILSFLFFHALHLVGSDG). Cystine bridges form between Cys41–Cys255, Cys89–Cys100, Cys105–Cys112, Cys166–Cys245, Cys171–Cys228, Cys179–Cys191, Cys195–Cys204, and Cys205–Cys215.

This sequence belongs to the thaumatin family. As to expression, expressed only in roots.

Functionally, involved in local responses of roots to colonization by non-pathogenic plant growth-promoting rhizobacteria (PGPR) fluorescent Pseudomonas spp., but seems to not being required for the establishment of subsequent induced systemic resistance (ISR). The protein is Thaumatin-like protein 1 of Arabidopsis thaliana (Mouse-ear cress).